The sequence spans 629 residues: tRNA uridine 5-carboxymethylaminomethyl modification enzyme MnmG (629 aa).

FAD is bound by residues 13 to 18 (GGGHAG), Val125, and Ser180. 273 to 287 (GPRYCPSIEDKVMRF) lines the NAD(+) pocket. Gln370 is a binding site for FAD.

It belongs to the MnmG family. Homodimer. Heterotetramer of two MnmE and two MnmG subunits. The cofactor is FAD.

It is found in the cytoplasm. In terms of biological role, NAD-binding protein involved in the addition of a carboxymethylaminomethyl (cmnm) group at the wobble position (U34) of certain tRNAs, forming tRNA-cmnm(5)s(2)U34. This is tRNA uridine 5-carboxymethylaminomethyl modification enzyme MnmG from Cronobacter sakazakii (strain ATCC BAA-894) (Enterobacter sakazakii).